A 244-amino-acid polypeptide reads, in one-letter code: Protein TIFY 10b (244 aa).

In terms of domain architecture, Tify spans 97–132; the sequence is QEPEKRQLTIFYGGKVLVFNDFPADKAKGLMQLASK. The segment at 174–244 is disordered; it reads QKPARANASD…AVVKPIERGQ (71 aa). The short motif at 185–210 is the Jas element; the sequence is PIARKASLHRFLEKRKDRLNAKTPYQ. Positions 187–194 match the Nuclear localization signal motif; that stretch reads ARKASLHR. The span at 194-204 shows a compositional bias: basic and acidic residues; it reads RFLEKRKDRLN.

It belongs to the TIFY/JAZ family. As to quaternary structure, interacts with BHLH148. Interacts with COI1A and COI1B in a coronatine-dependent manner. Coronatine is an analog of jasmonoyl isoleucine (JA-Ile). In terms of processing, ubiquitinated. Targeted for degradation by the SCF(COI1) E3 ubiquitin ligase-proteasome pathway during jasmonate signaling.

Its subcellular location is the nucleus. Its function is as follows. Repressor of jasmonate responses. The chain is Protein TIFY 10b from Oryza sativa subsp. japonica (Rice).